The following is a 778-amino-acid chain: Centromere/kinetochore protein zw10 homolog (778 aa).

Residues 47–99 adopt a coiled-coil conformation; that stretch reads FDRLENLEDIAEMSTRNLSNLIDQTAKDSPEMLAEIKSQAQSCENLVEFLQSM.

It belongs to the ZW10 family. Component of the RZZ complex composed of rod-1, czw-1 and zwl-1.

The protein resides in the chromosome. It is found in the centromere. It localises to the kinetochore. The protein localises to the cytoplasm. Its subcellular location is the cytoskeleton. The protein resides in the spindle. Essential component of the mitotic checkpoint, which prevents cells from prematurely exiting mitosis. Required for the assembly of the dynein-dynactin and mdf-1-mdf-2 complexes onto kinetochores. Its function related to the spindle assembly machinery and kinetochore-microtubule attachments likely depends on its association in the mitotic RZZ complex. The RZZ complex recruits the spindly-like protein spdl-1 to kinetochores. To prevent irregular chromosome segregation, the complex also inhibits the attachment of the kinetochore-associated NDC80 complex to microtubules. The recruitment of spdl-1 to kinetochores relieves this inhibition. Required for embryonic development. The chain is Centromere/kinetochore protein zw10 homolog from Caenorhabditis elegans.